Reading from the N-terminus, the 250-residue chain is Short-chain dehydrogenase RED3 (250 aa).

Ile-16, Ser-35, Glu-63, and Asn-91 together coordinate NADP(+). Active-site proton donor residues include Ser-145 and Tyr-164. NADP(+)-binding residues include Tyr-164, Lys-168, Val-195, and Ser-197. Catalysis depends on Lys-168, which acts as the Lowers pKa of active site Tyr.

It belongs to the short-chain dehydrogenases/reductases (SDR) family.

It participates in polyketide biosynthesis. In terms of biological role, short-chain dehydrogenase; part of the gene cluster that mediates the biosynthesis of pyriculol and pyriculariol, two heptaketides that induce lesion formation upon application on rice leaves but are dispensable for pathogenicity. The highly reducing polyketide synthase synthesizes the heptaketide backbone of pyriculol and pyriculariol. Pyriculol and pyriculariol contain several hydroxyl moieties and double bonds, so it can be assumed that several reduction steps occur during biosynthesis. These reactions could be executed by PKS19 itself or partly by the tailoring enzymes OXR1, OXR2, RED1, RED2 or RED3, identified within the cluster. The FAD-linked oxidoreductase OXR1 is the only tailoring enzyme for which the function has been determined yet, and is involved in the oxidation of dihydropyriculol and dihydropyriculariol into pyriculol and pyriculariol, respectively. The protein is Short-chain dehydrogenase RED3 of Pyricularia oryzae (strain 70-15 / ATCC MYA-4617 / FGSC 8958) (Rice blast fungus).